The sequence spans 152 residues: UPF0260 protein BAB1_1496 (152 aa).

The protein belongs to the UPF0260 family.

The polypeptide is UPF0260 protein BAB1_1496 (Brucella abortus (strain 2308)).